The sequence spans 211 residues: Secreted phosphoprotein 24 (211 aa).

Positions 1–29 (MISRMEKMTMMMKILIMFALGMNYWSCSG) are cleaved as a signal peptide. Cystine bridges form between C92–C103 and C116–C134. Position 96 is a phosphoserine (S96). A phosphoserine mark is found at S145, S146, S170, S173, and S182.

Belongs to the SPP2 family. Phosphorylation sites are present in the extracellular medium. As to expression, detected in liver and plasma.

It localises to the secreted. Could coordinate an aspect of bone turnover. The chain is Secreted phosphoprotein 24 (SPP2) from Homo sapiens (Human).